The following is a 356-amino-acid chain: MSQATFAKELTAKFAQLWTEKTKRPLPPVNQAMMQRLRQGQRQSGPNEVFSRVSALFRDLSLIPQSFENAELQDMAMEILPLDRLYSVAEERAEEEGERDNWGLQDYLIMELLRWFKQDYFTWVNSPPCETCGENGNVQFVRRENSTPEEQKYDASGTEVHQCSNCNTEIRFPRYNDLSKLMETRRGRCGEWAKCFAFFCRALGLRTRYIWNAEDHVWSEVYSERRKEWIHTDSCEEAWNSPTIYSQGWGKKMSYVVGFSGDGVTDVTRRYVRKADQQLPRTMVPDEQFKTILNSITSDIRQNLSPSEKEELKREDEAEERELASYNADEPQEAQMPRQSGSVEWTKARGEGGSDD.

Residues C129, C132, C163, and C166 each coordinate Zn(2+). The Nucleophile role is filled by C189. Active-site residues include H216 and D233. Position 236 (E236) interacts with substrate. The disordered stretch occupies residues 300–356 (IRQNLSPSEKEELKREDEAEERELASYNADEPQEAQMPRQSGSVEWTKARGEGGSDD). 2 stretches are compositionally biased toward basic and acidic residues: residues 307 to 316 (SEKEELKRED) and 346 to 356 (TKARGEGGSDD).

Belongs to the transglutaminase-like superfamily. PNGase family. Requires Zn(2+) as cofactor.

Its subcellular location is the cytoplasm. The enzyme catalyses Hydrolysis of an N(4)-(acetyl-beta-D-glucosaminyl)asparagine residue in which the glucosamine residue may be further glycosylated, to yield a (substituted) N-acetyl-beta-D-glucosaminylamine and a peptide containing an aspartate residue.. Functionally, specifically deglycosylates the denatured form of N-linked glycoproteins in the cytoplasm and assists their proteasome-mediated degradation. Cleaves the beta-aspartyl-glucosamine (GlcNAc) of the glycan and the amide side chain of Asn, converting Asn to Asp. Prefers proteins containing high-mannose over those bearing complex type oligosaccharides. Can recognize misfolded proteins in the endoplasmic reticulum that are exported to the cytosol to be destroyed and deglycosylate them, while it has no activity toward native proteins. Deglycosylation is a prerequisite for subsequent proteasome-mediated degradation of some, but not all, misfolded glycoproteins. This is Peptide-N(4)-(N-acetyl-beta-glucosaminyl)asparagine amidase (PNG1) from Yarrowia lipolytica (strain CLIB 122 / E 150) (Yeast).